Reading from the N-terminus, the 190-residue chain is RNA pyrophosphohydrolase (190 aa).

The Nudix hydrolase domain occupies 6 to 149; the sequence is GYRPNVGIIL…KRDVYTQALN (144 aa). The Nudix box motif lies at 38–59; it reads GGIKYGESPVQAMYRELHEEVG. Positions 167 to 190 are disordered; the sequence is QRVHGPRSTDNPSSETDGHAHIAG.

The protein belongs to the Nudix hydrolase family. RppH subfamily. A divalent metal cation serves as cofactor.

In terms of biological role, accelerates the degradation of transcripts by removing pyrophosphate from the 5'-end of triphosphorylated RNA, leading to a more labile monophosphorylated state that can stimulate subsequent ribonuclease cleavage. This Bordetella parapertussis (strain 12822 / ATCC BAA-587 / NCTC 13253) protein is RNA pyrophosphohydrolase.